A 310-amino-acid polypeptide reads, in one-letter code: Ribosomal RNA small subunit methyltransferase H (310 aa).

Residues 33–35 (AGH), aspartate 53, tyrosine 83, aspartate 100, and glutamine 107 each bind S-adenosyl-L-methionine.

This sequence belongs to the methyltransferase superfamily. RsmH family.

The protein localises to the cytoplasm. It catalyses the reaction cytidine(1402) in 16S rRNA + S-adenosyl-L-methionine = N(4)-methylcytidine(1402) in 16S rRNA + S-adenosyl-L-homocysteine + H(+). Its function is as follows. Specifically methylates the N4 position of cytidine in position 1402 (C1402) of 16S rRNA. The protein is Ribosomal RNA small subunit methyltransferase H of Clostridium perfringens (strain ATCC 13124 / DSM 756 / JCM 1290 / NCIMB 6125 / NCTC 8237 / Type A).